The primary structure comprises 406 residues: Vacuole membrane protein 1 (406 aa).

Positions 1 to 20 are enriched in basic and acidic residues; sequence MAENGKNCDQRRVAMNKEQH. Residues 1–36 form a disordered region; that stretch reads MAENGKNCDQRRVAMNKEQHNGNFTDPSSVNEKKRR. Ala-2 carries the post-translational modification N-acetylalanine. At 2–43 the chain is on the cytoplasmic side; it reads AENGKNCDQRRVAMNKEQHNGNFTDPSSVNEKKRREREERQN. Polar residues predominate over residues 21 to 30; the sequence is NGNFTDPSSV. The helical transmembrane segment at 44–64 threads the bilayer; the sequence is IVLWRQPLITLQYFSLEILVI. Topologically, residues 65 to 77 are extracellular; it reads LKEWTSKLWHRQS. The helical transmembrane segment at 78–98 threads the bilayer; the sequence is IVVSFLLLLAVLIATYYVEGA. The Cytoplasmic segment spans residues 99–109; the sequence is HQQYVQRIEKQ. The helical transmembrane segment at 110-130 threads the bilayer; that stretch reads FLLYAYWIGLGILSSVGLGTG. Over 131–250 the chain is Extracellular; the sequence is LHTFLLYLGP…ASRAKLAVQK (120 aa). The VTT domain stretch occupies residues 173 to 316; the sequence is GTEGTISLWS…FVIITFSKHI (144 aa). Residues 251 to 271 form a helical membrane-spanning segment; that stretch reads LVQKVGFFGILACASIPNPLF. Topologically, residues 272-273 are cytoplasmic; it reads DL. Residues 274-294 traverse the membrane as a helical segment; it reads AGITCGHFLVPFWTFFGATLI. Residues 295 to 305 are Extracellular-facing; that stretch reads GKAIIKMHIQK. A helical membrane pass occupies residues 306 to 326; sequence IFVIITFSKHIVEQMVAFIGA. Topologically, residues 327-363 are cytoplasmic; sequence VPGIGPSLQKPFQEYLEAQRQKLHHKSEMGTPQGENW. Residues 364 to 384 traverse the membrane as a helical segment; that stretch reads LSWMFEKLVVVMVCYFILSII. The Extracellular segment spans residues 385 to 406; it reads NSMAQSYAKRIQQRLNSEEKTK.

The protein belongs to the VMP1 family. As to quaternary structure, interacts with BECN1. Interacts with TJP1. Interacts with TP53INP2. Interacts with TMEM41B. Interacts with ATP2A2, PLN and SLN; competes with PLN and SLN to prevent them from forming an inhibitory complex with ATP2A2. Interacts with ATG2A.

It localises to the endoplasmic reticulum-Golgi intermediate compartment membrane. The protein localises to the cell membrane. It is found in the vacuole membrane. Its subcellular location is the endoplasmic reticulum membrane. The catalysed reaction is a 1,2-diacyl-sn-glycero-3-phospho-L-serine(in) = a 1,2-diacyl-sn-glycero-3-phospho-L-serine(out). It carries out the reaction cholesterol(in) = cholesterol(out). It catalyses the reaction a 1,2-diacyl-sn-glycero-3-phosphocholine(in) = a 1,2-diacyl-sn-glycero-3-phosphocholine(out). The enzyme catalyses a 1,2-diacyl-sn-glycero-3-phosphoethanolamine(in) = a 1,2-diacyl-sn-glycero-3-phosphoethanolamine(out). In terms of biological role, phospholipid scramblase involved in lipid homeostasis and membrane dynamics processes. Has phospholipid scramblase activity toward cholesterol and phosphatidylserine, as well as phosphatidylethanolamine and phosphatidylcholine. Required for autophagosome formation: participates in early stages of autophagosome biogenesis at the endoplasmic reticulum (ER) membrane by reequilibrating the leaflets of the ER as lipids are extracted by ATG2 (ATG2A or ATG2B) to mediate autophagosome assembly. Regulates ATP2A2 activity to control ER-isolation membrane contacts for autophagosome formation. In addition to autophagy, involved in other processes in which phospholipid scramblase activity is required. Modulates ER contacts with lipid droplets, mitochondria and endosomes. Plays an essential role in formation of cell junctions. Upon stress such as bacterial and viral infection, promotes formation of cytoplasmic vacuoles followed by cell death. Involved in the cytoplasmic vacuolization of acinar cells during the early stage of acute pancreatitis. This Pongo abelii (Sumatran orangutan) protein is Vacuole membrane protein 1.